A 604-amino-acid polypeptide reads, in one-letter code: Aspartate--tRNA(Asp/Asn) ligase (604 aa).

Residue Glu-177 participates in L-aspartate binding. The tract at residues 201 to 204 (QLFK) is aspartate. L-aspartate is bound at residue Arg-223. ATP-binding positions include 223–225 (RDE) and Gln-232. His-457 serves as a coordination point for L-aspartate. Glu-495 lines the ATP pocket. An L-aspartate-binding site is contributed by Arg-502. 547–550 (GLDR) provides a ligand contact to ATP.

The protein belongs to the class-II aminoacyl-tRNA synthetase family. Type 1 subfamily. Homodimer.

It is found in the cytoplasm. It catalyses the reaction tRNA(Asx) + L-aspartate + ATP = L-aspartyl-tRNA(Asx) + AMP + diphosphate. Aspartyl-tRNA synthetase with relaxed tRNA specificity since it is able to aspartylate not only its cognate tRNA(Asp) but also tRNA(Asn). Reaction proceeds in two steps: L-aspartate is first activated by ATP to form Asp-AMP and then transferred to the acceptor end of tRNA(Asp/Asn). The sequence is that of Aspartate--tRNA(Asp/Asn) ligase from Synechococcus sp. (strain RCC307).